Reading from the N-terminus, the 203-residue chain is Large ribosomal subunit protein bL25 (203 aa).

The protein belongs to the bacterial ribosomal protein bL25 family. CTC subfamily. Part of the 50S ribosomal subunit; part of the 5S rRNA/L5/L18/L25 subcomplex. Contacts the 5S rRNA. Binds to the 5S rRNA independently of L5 and L18.

Functionally, this is one of the proteins that binds to the 5S RNA in the ribosome where it forms part of the central protuberance. This is Large ribosomal subunit protein bL25 from Wolbachia pipientis wMel.